The sequence spans 169 residues: Cell division inhibitor SulA (169 aa).

The interval 106-112 is ftsZ binding; sequence ALRTGNY. Residues 162–169 are lon protease binding; the sequence is KIHSNLYH.

Belongs to the SulA family. As to quaternary structure, interacts with FtsZ. Is rapidly cleaved and degraded by the Lon protease once DNA damage is repaired.

Functionally, component of the SOS system and an inhibitor of cell division. Accumulation of SulA causes rapid cessation of cell division and the appearance of long, non-septate filaments. In the presence of GTP, binds a polymerization-competent form of FtsZ in a 1:1 ratio, thus inhibiting FtsZ polymerization and therefore preventing it from participating in the assembly of the Z ring. This mechanism prevents the premature segregation of damaged DNA to daughter cells during cell division. This chain is Cell division inhibitor SulA, found in Salmonella choleraesuis (strain SC-B67).